A 170-amino-acid polypeptide reads, in one-letter code: Ribosome maturation factor RimM (170 aa).

The region spanning 98 to 170 (PDEYYWVDLE…LIVVDWDPDF (73 aa)) is the PRC barrel domain.

This sequence belongs to the RimM family. Binds ribosomal protein uS19.

The protein localises to the cytoplasm. An accessory protein needed during the final step in the assembly of 30S ribosomal subunit, possibly for assembly of the head region. Essential for efficient processing of 16S rRNA. May be needed both before and after RbfA during the maturation of 16S rRNA. It has affinity for free ribosomal 30S subunits but not for 70S ribosomes. The chain is Ribosome maturation factor RimM from Xanthomonas campestris pv. campestris (strain 8004).